The following is a 79-amino-acid chain: Small ribosomal subunit protein uS17 (79 aa).

This sequence belongs to the universal ribosomal protein uS17 family. As to quaternary structure, part of the 30S ribosomal subunit.

Functionally, one of the primary rRNA binding proteins, it binds specifically to the 5'-end of 16S ribosomal RNA. The sequence is that of Small ribosomal subunit protein uS17 from Rhizobium johnstonii (strain DSM 114642 / LMG 32736 / 3841) (Rhizobium leguminosarum bv. viciae).